Here is a 176-residue protein sequence, read N- to C-terminus: Inner membrane-spanning protein YciB (176 aa).

Helical transmembrane passes span 3–23 (FLFDLFPIILFFAAFKVWGIF), 24–44 (TATAVAIVATLAQVAWVAFRH), 49–69 (TMLWVSLGVIVVFGGATLVLH), 81–101 (LYWLFAIGLLAARYAFGNNLI), 121–141 (VAWALFFAVLGVANLYVVHNF), and 149–169 (FKLFGTTGAMVVFIILQSLWL).

This sequence belongs to the YciB family.

It localises to the cell inner membrane. Plays a role in cell envelope biogenesis, maintenance of cell envelope integrity and membrane homeostasis. This Burkholderia lata (strain ATCC 17760 / DSM 23089 / LMG 22485 / NCIMB 9086 / R18194 / 383) protein is Inner membrane-spanning protein YciB.